The following is a 152-amino-acid chain: Ribosome maturation factor RimP (152 aa).

The protein belongs to the RimP family.

It is found in the cytoplasm. Its function is as follows. Required for maturation of 30S ribosomal subunits. The sequence is that of Ribosome maturation factor RimP from Erwinia tasmaniensis (strain DSM 17950 / CFBP 7177 / CIP 109463 / NCPPB 4357 / Et1/99).